Here is a 137-residue protein sequence, read N- to C-terminus: ATP synthase epsilon chain (137 aa).

Belongs to the ATPase epsilon chain family. F-type ATPases have 2 components, CF(1) - the catalytic core - and CF(0) - the membrane proton channel. CF(1) has five subunits: alpha(3), beta(3), gamma(1), delta(1), epsilon(1). CF(0) has three main subunits: a, b and c.

Its subcellular location is the cellular thylakoid membrane. Functionally, produces ATP from ADP in the presence of a proton gradient across the membrane. The polypeptide is ATP synthase epsilon chain (Trichodesmium erythraeum (strain IMS101)).